The following is an 816-amino-acid chain: Leucine--tRNA ligase (816 aa).

Residues 46–56 (PYPSGALHMGH) carry the 'HIGH' region motif. A 'KMSKS' region motif is present at residues 638–642 (KMSKS). Residue lysine 641 coordinates ATP.

Belongs to the class-I aminoacyl-tRNA synthetase family.

It localises to the cytoplasm. It carries out the reaction tRNA(Leu) + L-leucine + ATP = L-leucyl-tRNA(Leu) + AMP + diphosphate. This chain is Leucine--tRNA ligase, found in Xanthomonas campestris pv. campestris (strain ATCC 33913 / DSM 3586 / NCPPB 528 / LMG 568 / P 25).